A 188-amino-acid chain; its full sequence is MKANDIKKGNVVEFNNGVYQIRDIERSSPQGRGGNVRFRFIMYSVPGGNKLDASFDADDNLVEVELLRRQSTYSYKDGDAFVFLDDEDYTPYTLDADVIGDDAGYITDGLTGIYVQVIDEQPVAIQLPASVVLEVIETPPELKGGTATKRPKPAKLNTGIEIMVPEYIVNGERVLVNTATGEFAGRAD.

The protein belongs to the elongation factor P family.

This Stenotrophomonas maltophilia (strain R551-3) protein is Elongation factor P-like protein.